Reading from the N-terminus, the 217-residue chain is Aminopyrimidine aminohydrolase (217 aa).

Aspartate 44 serves as a coordination point for substrate. The active-site Nucleophile is the cysteine 135. Positions 139 and 165 each coordinate substrate. Residue glutamate 207 is the Proton donor of the active site.

The protein belongs to the TenA family. Homotetramer.

It catalyses the reaction 4-amino-5-aminomethyl-2-methylpyrimidine + H2O = 4-amino-5-hydroxymethyl-2-methylpyrimidine + NH4(+). The protein operates within cofactor biosynthesis; thiamine diphosphate biosynthesis. Functionally, catalyzes an amino-pyrimidine hydrolysis reaction at the C5' of the pyrimidine moiety of thiamine compounds to give a hydroxymethylpyrimidine (HMP). Displays low activity on 4-amino-5-aminomethyl-2-methylpyrimidine as substrate, indicating that the enzyme may act on a different HMP precursor that may derive from the human stomach food assumption or processing. Is probably involved in thiamine biosynthesis. Does not display thiaminase II activity, as it is unable to hydrolyze thiamine. This is Aminopyrimidine aminohydrolase from Helicobacter pylori (Campylobacter pylori).